The following is a 317-amino-acid chain: Metaxin-1 (317 aa).

Residues lysine 38, lysine 41, and lysine 78 each participate in a glycyl lysine isopeptide (Lys-Gly) (interchain with G-Cter in ubiquitin) cross-link. Residues 164-184 (EELEKELYQEAQECLTLLSQR) traverse the membrane as a helical segment.

This sequence belongs to the metaxin family. As to quaternary structure, interacts with MTX2/metaxin-2. Associates with the mitochondrial contact site and cristae organizing system (MICOS) complex, composed of at least MICOS10/MIC10, CHCHD3/MIC19, CHCHD6/MIC25, APOOL/MIC27, IMMT/MIC60, APOO/MIC23/MIC26 and QIL1/MIC13. This complex was also known under the names MINOS or MitOS complex. The MICOS complex associates with mitochondrial outer membrane proteins SAMM50, MTX1 and MTX2 (together described as components of the mitochondrial outer membrane sorting assembly machinery (SAM) complex) and DNAJC11, mitochondrial inner membrane protein TMEM11 and with HSPA9. The MICOS and SAM complexes together with DNAJC11 are part of a large protein complex spanning both membranes termed the mitochondrial intermembrane space bridging (MIB) complex. Interacts with ARMC1. Ubiquitinated by PRKN during mitophagy, leading to its degradation and enhancement of mitophagy. Deubiquitinated by USP30.

The protein resides in the mitochondrion outer membrane. In terms of biological role, involved in transport of proteins into the mitochondrion. Essential for embryonic development. The protein is Metaxin-1 (MTX1) of Bos taurus (Bovine).